The following is a 100-amino-acid chain: DNA base-flipping protein (100 aa).

Belongs to the MGMT family. ATL subfamily.

Functionally, involved in DNA damage recognition. Binds DNA containing O(6)-methylguanine. Binds to the damaged base and flips the base out of the DNA duplex into an extrahelical conformation, which allows processing by repair proteins. This chain is DNA base-flipping protein, found in Vibrio parahaemolyticus serotype O3:K6 (strain AQ3810).